Consider the following 177-residue polypeptide: Large ribosomal subunit protein uL10 (177 aa).

Belongs to the universal ribosomal protein uL10 family. Part of the ribosomal stalk of the 50S ribosomal subunit. The N-terminus interacts with L11 and the large rRNA to form the base of the stalk. The C-terminus forms an elongated spine to which L12 dimers bind in a sequential fashion forming a multimeric L10(L12)X complex.

Forms part of the ribosomal stalk, playing a central role in the interaction of the ribosome with GTP-bound translation factors. This chain is Large ribosomal subunit protein uL10, found in Thermoanaerobacter sp. (strain X514).